A 591-amino-acid chain; its full sequence is V-type ATP synthase alpha chain (591 aa).

233 to 240 contributes to the ATP binding site; that stretch reads GPFGAGKT.

It belongs to the ATPase alpha/beta chains family.

The catalysed reaction is ATP + H2O + 4 H(+)(in) = ADP + phosphate + 5 H(+)(out). Its function is as follows. Produces ATP from ADP in the presence of a proton gradient across the membrane. The V-type alpha chain is a catalytic subunit. The sequence is that of V-type ATP synthase alpha chain from Streptococcus pyogenes serotype M28 (strain MGAS6180).